The primary structure comprises 276 residues: 2-dehydro-3-deoxyphosphooctonate aldolase (276 aa).

It belongs to the KdsA family.

The protein localises to the cytoplasm. The enzyme catalyses D-arabinose 5-phosphate + phosphoenolpyruvate + H2O = 3-deoxy-alpha-D-manno-2-octulosonate-8-phosphate + phosphate. The protein operates within carbohydrate biosynthesis; 3-deoxy-D-manno-octulosonate biosynthesis; 3-deoxy-D-manno-octulosonate from D-ribulose 5-phosphate: step 2/3. Its pathway is bacterial outer membrane biogenesis; lipopolysaccharide biosynthesis. This chain is 2-dehydro-3-deoxyphosphooctonate aldolase, found in Xylella fastidiosa (strain M23).